Reading from the N-terminus, the 305-residue chain is Probable 5-dehydro-4-deoxyglucarate dehydratase (305 aa).

Belongs to the DapA family.

It carries out the reaction 5-dehydro-4-deoxy-D-glucarate + H(+) = 2,5-dioxopentanoate + CO2 + H2O. The protein operates within carbohydrate acid metabolism; D-glucarate degradation; 2,5-dioxopentanoate from D-glucarate: step 2/2. The sequence is that of Probable 5-dehydro-4-deoxyglucarate dehydratase from Xanthomonas campestris pv. campestris (strain B100).